The following is a 381-amino-acid chain: Flap endonuclease 1 (381 aa).

Positions 1–105 (MGIKNLATLI…YELDKRKVRR (105 aa)) are N-domain. D34 contributes to the Mg(2+) binding site. R47 and R71 together coordinate DNA. Positions 87, 156, 158, 177, and 179 each coordinate Mg(2+). An I-domain region spans residues 120 to 251 (EIIKHERRLV…VNALKLIKEH (132 aa)). E156 serves as a coordination point for DNA. Residues G229 and D231 each contribute to the DNA site. D231 serves as a coordination point for Mg(2+). The tract at residues 339–347 (VQKRLDSFF) is interaction with PCNA. The interval 360–381 (AAKKAKDAKKKAAAKGKIAKRR) is disordered. A compositionally biased stretch (basic residues) spans 365 to 381 (KDAKKKAAAKGKIAKRR).

It belongs to the XPG/RAD2 endonuclease family. FEN1 subfamily. In terms of assembly, interacts with PCNA. Three molecules of FEN1 bind to one PCNA trimer with each molecule binding to one PCNA monomer. PCNA stimulates the nuclease activity without altering cleavage specificity. It depends on Mg(2+) as a cofactor. In terms of processing, phosphorylated. Phosphorylation upon DNA damage induces relocalization to the nuclear plasma.

Its subcellular location is the nucleus. The protein localises to the nucleolus. It localises to the nucleoplasm. The protein resides in the mitochondrion. In terms of biological role, structure-specific nuclease with 5'-flap endonuclease and 5'-3' exonuclease activities involved in DNA replication and repair. During DNA replication, cleaves the 5'-overhanging flap structure that is generated by displacement synthesis when DNA polymerase encounters the 5'-end of a downstream Okazaki fragment. It enters the flap from the 5'-end and then tracks to cleave the flap base, leaving a nick for ligation. Also involved in the long patch base excision repair (LP-BER) pathway, by cleaving within the apurinic/apyrimidinic (AP) site-terminated flap. Acts as a genome stabilization factor that prevents flaps from equilibrating into structures that lead to duplications and deletions. Also possesses 5'-3' exonuclease activity on nicked or gapped double-stranded DNA, and exhibits RNase H activity. Also involved in replication and repair of rDNA and in repairing mitochondrial DNA. This is Flap endonuclease 1 from Kluyveromyces lactis (strain ATCC 8585 / CBS 2359 / DSM 70799 / NBRC 1267 / NRRL Y-1140 / WM37) (Yeast).